The following is a 399-amino-acid chain: Nuclear hormone receptor family member nhr-125 (399 aa).

Residues 10 to 80 constitute a DNA-binding region (nuclear receptor); the sequence is PFSCRICNQK…MGMDTTKFQY (71 aa). NR C4-type zinc fingers lie at residues 13 to 33 and 50 to 63; these read CRICNQKAHGNHFGVLTCRAC and CQKGGCSRNFCKRC. The 244-residue stretch at 149-392 folds into the NR LBD domain; the sequence is QLENLTEGFK…EKLQKSQFSI (244 aa).

This sequence belongs to the nuclear hormone receptor family.

Its subcellular location is the nucleus. In terms of biological role, orphan nuclear receptor. The polypeptide is Nuclear hormone receptor family member nhr-125 (nhr-125) (Caenorhabditis elegans).